Reading from the N-terminus, the 483-residue chain is Altronate oxidoreductase (483 aa).

18 to 29 (IIQFGEGNFLRA) is a binding site for NAD(+).

It belongs to the mannitol dehydrogenase family. UxaB subfamily.

The enzyme catalyses D-altronate + NAD(+) = keto-D-tagaturonate + NADH + H(+). It functions in the pathway carbohydrate metabolism; pentose and glucuronate interconversion. The protein is Altronate oxidoreductase of Escherichia coli (strain 55989 / EAEC).